Reading from the N-terminus, the 560-residue chain is Bifunctional NAD(P)H-hydrate repair enzyme (560 aa).

The interval 1 to 241 (MLSRLSERCT…WMTAPERMRV (241 aa)) is NAD(P)H-hydrate epimerase. One can recognise a YjeF N-terminal domain in the interval 29 to 235 (LRDAEPAAAA…SLGLEDWMTA (207 aa)). The NADPHX 1; for epimerase activity stretch occupies residues 77–81 (NNGGD). K(+)-binding residues include Asn-78 and Asp-145. An NADPHX 1; for epimerase activity region spans residues 149–155 (GTGICGP). The (6S)-NADPHX site is built by Tyr-160 and Asp-178. Ser-181 contacts K(+). A YjeF C-terminal domain is found at 249 to 547 (LDDVYEYFGI…HRVPLIVNAS (299 aa)). The ADP-dependent (S)-NAD(P)H-hydrate dehydratase stretch occupies residues 249-560 (LDDVYEYFGI…PASRQRPSGQ (312 aa)). (6S)-NADPHX is bound at residue Gly-351. Residues 417–423 (HPGEAAR) form an NADPHX 2; for dehydratase activity region. ADP-binding positions include 454 to 458 (KGPGT) and 475 to 484 (NAGMASGGMG). Residue Asp-485 participates in (6S)-NADPHX binding.

The protein in the N-terminal section; belongs to the NnrE/AIBP family. This sequence in the C-terminal section; belongs to the NnrD/CARKD family. It depends on K(+) as a cofactor.

The enzyme catalyses (6S)-NADHX + ADP = AMP + phosphate + NADH + H(+). It carries out the reaction (6S)-NADPHX + ADP = AMP + phosphate + NADPH + H(+). The catalysed reaction is (6R)-NADHX = (6S)-NADHX. It catalyses the reaction (6R)-NADPHX = (6S)-NADPHX. Bifunctional enzyme that catalyzes the epimerization of the S- and R-forms of NAD(P)HX and the dehydration of the S-form of NAD(P)HX at the expense of ADP, which is converted to AMP. This allows the repair of both epimers of NAD(P)HX, a damaged form of NAD(P)H that is a result of enzymatic or heat-dependent hydration. This is Bifunctional NAD(P)H-hydrate repair enzyme from Leishmania major.